The sequence spans 235 residues: Probable transcriptional regulatory protein Ccon26_04940 (235 aa).

This sequence belongs to the TACO1 family.

The protein resides in the cytoplasm. This chain is Probable transcriptional regulatory protein Ccon26_04940, found in Campylobacter concisus (strain 13826).